The chain runs to 468 residues: Ribulose bisphosphate carboxylase large chain (468 aa).

Lysine 5 is modified (N6,N6,N6-trimethyllysine). Substrate is bound by residues asparagine 114 and threonine 164. Lysine 166 functions as the Proton acceptor in the catalytic mechanism. Residue lysine 168 participates in substrate binding. 3 residues coordinate Mg(2+): lysine 192, aspartate 194, and glutamate 195. The residue at position 192 (lysine 192) is an N6-carboxylysine. Catalysis depends on histidine 285, which acts as the Proton acceptor. Substrate is bound by residues arginine 286, histidine 318, and serine 370.

The protein belongs to the RuBisCO large chain family. Type I subfamily. Heterohexadecamer of 8 large chains and 8 small chains; disulfide-linked. The disulfide link is formed within the large subunit homodimers. The cofactor is Mg(2+). In terms of processing, the disulfide bond which can form in the large chain dimeric partners within the hexadecamer appears to be associated with oxidative stress and protein turnover.

Its subcellular location is the plastid. The protein resides in the chloroplast. It carries out the reaction 2 (2R)-3-phosphoglycerate + 2 H(+) = D-ribulose 1,5-bisphosphate + CO2 + H2O. It catalyses the reaction D-ribulose 1,5-bisphosphate + O2 = 2-phosphoglycolate + (2R)-3-phosphoglycerate + 2 H(+). RuBisCO catalyzes two reactions: the carboxylation of D-ribulose 1,5-bisphosphate, the primary event in carbon dioxide fixation, as well as the oxidative fragmentation of the pentose substrate in the photorespiration process. Both reactions occur simultaneously and in competition at the same active site. The protein is Ribulose bisphosphate carboxylase large chain of Salvia divinorum (Maria pastora).